The chain runs to 158 residues: ATP synthase subunit delta, mitochondrial (158 aa).

A mitochondrion-targeting transit peptide spans Met-1–Tyr-22.

The protein belongs to the ATPase epsilon chain family. In terms of assembly, F-type ATPases have 2 components, CF(1) - the catalytic core - and CF(0) - the membrane proton channel. CF(1) has five subunits: alpha(3), beta(3), gamma(1), delta(1), epsilon(1). CF(0) has three main subunits: a, b and c.

It localises to the mitochondrion. The protein resides in the mitochondrion inner membrane. Its function is as follows. Mitochondrial membrane ATP synthase (F(1)F(0) ATP synthase or Complex V) produces ATP from ADP in the presence of a proton gradient across the membrane which is generated by electron transport complexes of the respiratory chain. F-type ATPases consist of two structural domains, F(1) - containing the extramembraneous catalytic core, and F(0) - containing the membrane proton channel, linked together by a central stalk and a peripheral stalk. During catalysis, ATP turnover in the catalytic domain of F(1) is coupled via a rotary mechanism of the central stalk subunits to proton translocation. Part of the complex F(1) domain and of the central stalk which is part of the complex rotary element. Rotation of the central stalk against the surrounding alpha(3)beta(3) subunits leads to hydrolysis of ATP in three separate catalytic sites on the beta subunits. The polypeptide is ATP synthase subunit delta, mitochondrial (ATP16) (Eremothecium gossypii (strain ATCC 10895 / CBS 109.51 / FGSC 9923 / NRRL Y-1056) (Yeast)).